The primary structure comprises 362 residues: MSMPFRVLGIETSCDETAAAVVEPAADGRGGRIMAEALLSQVEEHRPYGGVVPEIAARSHLDHVDSLVIRALGEAGLTVHDIDAVAATGGPGLIGGVIVGVMTAKAIAQVAGKPFIAVNHLEGHALTVRMTAGIDFPYLLLLASGGHCQLLAVEGVGRAKRLGTTIDDAAGEAFDKVAKMLGLGYPGGPAVERAARRGDPRRFRLPRPLLDRPGCDLSFSGLKTAVRQTVEKLPPGPLSEGDIADLCASFQAAVADCLADRCRVAAGIFSARHGRGRPLVVAGGVAANASLRAALTEVARQADMTFVAPPLALCTDNAAMIAWVGVERLRLGLVDTMDFKPRPRWPLDPDAPKAAGAGGVKA.

Fe cation contacts are provided by histidine 120 and histidine 124. Residues 142-146 (LASGG), aspartate 175, glycine 188, and asparagine 288 each bind substrate. Aspartate 316 lines the Fe cation pocket. A compositionally biased stretch (basic and acidic residues) spans 342–351 (RPRWPLDPDA). A disordered region spans residues 342 to 362 (RPRWPLDPDAPKAAGAGGVKA).

It belongs to the KAE1 / TsaD family. It depends on Fe(2+) as a cofactor.

The protein resides in the cytoplasm. The catalysed reaction is L-threonylcarbamoyladenylate + adenosine(37) in tRNA = N(6)-L-threonylcarbamoyladenosine(37) in tRNA + AMP + H(+). In terms of biological role, required for the formation of a threonylcarbamoyl group on adenosine at position 37 (t(6)A37) in tRNAs that read codons beginning with adenine. Is involved in the transfer of the threonylcarbamoyl moiety of threonylcarbamoyl-AMP (TC-AMP) to the N6 group of A37, together with TsaE and TsaB. TsaD likely plays a direct catalytic role in this reaction. In Rhodospirillum rubrum (strain ATCC 11170 / ATH 1.1.1 / DSM 467 / LMG 4362 / NCIMB 8255 / S1), this protein is tRNA N6-adenosine threonylcarbamoyltransferase.